We begin with the raw amino-acid sequence, 222 residues long: L-cystine transport system permease protein TcyL (222 aa).

Residues 1–22 (MQESIQLVIDSLPFLLKGAGYT) are Periplasmic-facing. Residues 19–207 (AGYTLQLSIG…IMATVLSTLQ (189 aa)) form the ABC transmembrane type-1 domain. The helical transmembrane segment at 23-43 (LQLSIGGMFFGLLLGFILALM) threads the bilayer. The Cytoplasmic segment spans residues 44 to 64 (RLSPIWPVRWLARFYISIFRG). The helical transmembrane segment at 65 to 85 (TPLIAQLFMIYYGLPQFGIEL) threads the bilayer. The Periplasmic segment spans residues 86–182 (DPIPSAMIGL…RQAQLITSRT (97 aa)). Residues 183–203 (LEVFTMYLAASLIYWIMATVL) form a helical membrane-spanning segment. Residues 204–222 (STLQNHFENQLNRQEREPK) are Cytoplasmic-facing.

This sequence belongs to the binding-protein-dependent transport system permease family. HisMQ subfamily. In terms of assembly, the complex is composed of two ATP-binding proteins (TcyN), two transmembrane proteins (TcyL) and a solute-binding protein (TcyJ).

It is found in the cell inner membrane. Its function is as follows. Part of the ABC transporter complex TcyJLN involved in L-cystine import. Responsible for the translocation of the substrate across the membrane. This is L-cystine transport system permease protein TcyL from Escherichia coli O6:H1 (strain CFT073 / ATCC 700928 / UPEC).